We begin with the raw amino-acid sequence, 140 residues long: Small ribosomal subunit protein uS12 (140 aa).

A disordered region spans residues 1 to 44; the sequence is MPTFNQLVRKGRKTMEKNSQAPALQKGFNSLRKKTTDASAPQKR. 3-methylthioaspartic acid is present on Asp-102. Positions 120-140 are disordered; that stretch reads VAKRRQARSKYGAKRPKEAKK. Positions 121 to 140 are enriched in basic residues; it reads AKRRQARSKYGAKRPKEAKK.

It belongs to the universal ribosomal protein uS12 family. Part of the 30S ribosomal subunit. Contacts proteins S8 and S17. May interact with IF1 in the 30S initiation complex.

In terms of biological role, with S4 and S5 plays an important role in translational accuracy. Functionally, interacts with and stabilizes bases of the 16S rRNA that are involved in tRNA selection in the A site and with the mRNA backbone. Located at the interface of the 30S and 50S subunits, it traverses the body of the 30S subunit contacting proteins on the other side and probably holding the rRNA structure together. The combined cluster of proteins S8, S12 and S17 appears to hold together the shoulder and platform of the 30S subunit. This Lachnoclostridium phytofermentans (strain ATCC 700394 / DSM 18823 / ISDg) (Clostridium phytofermentans) protein is Small ribosomal subunit protein uS12.